The sequence spans 513 residues: Probable cytosol aminopeptidase (513 aa).

Mn(2+) contacts are provided by K275 and D280. K287 is an active-site residue. Mn(2+) contacts are provided by D298, D357, and E359. R361 is an active-site residue.

This sequence belongs to the peptidase M17 family. Requires Mn(2+) as cofactor.

The protein resides in the cytoplasm. It catalyses the reaction Release of an N-terminal amino acid, Xaa-|-Yaa-, in which Xaa is preferably Leu, but may be other amino acids including Pro although not Arg or Lys, and Yaa may be Pro. Amino acid amides and methyl esters are also readily hydrolyzed, but rates on arylamides are exceedingly low.. It carries out the reaction Release of an N-terminal amino acid, preferentially leucine, but not glutamic or aspartic acids.. Its function is as follows. Presumably involved in the processing and regular turnover of intracellular proteins. Catalyzes the removal of unsubstituted N-terminal amino acids from various peptides. The chain is Probable cytosol aminopeptidase from Streptomyces avermitilis (strain ATCC 31267 / DSM 46492 / JCM 5070 / NBRC 14893 / NCIMB 12804 / NRRL 8165 / MA-4680).